A 524-amino-acid polypeptide reads, in one-letter code: Adhesion G-protein coupled receptor G5 (524 aa).

The N-terminal stretch at 1–23 (MDPHGALFFYLCLLAAQVVLVET) is a signal peptide. At 24 to 246 (LSDLLVLMKR…PAELQVPLEY (223 aa)) the chain is on the extracellular side. 6 N-linked (GlcNAc...) asparagine glycosylation sites follow: Asn-58, Asn-65, Asn-96, Asn-143, Asn-169, and Asn-175. The region spanning 74-235 (QSLVFKLSCD…AVLMQLSGDP (162 aa)) is the GAIN-B domain. Cystine bridges form between Cys-185–Cys-217 and Cys-205–Cys-219. Positions 185-235 (CVFWKEGASKSSWGAWSPEGCYTEQPSATQVLCHCNHLTYFAVLMQLSGDP) are GPS. The segment at 224 to 232 (YFAVLMQLS) is stachel. Residues 247-267 (ISFVGCSISIVASLLTILLYA) form a helical membrane-spanning segment. At 268-284 (QSRKQSDSTTRIHMNLN) the chain is on the cytoplasmic side. Residues 285–305 (GSVLLLNVTFLLSSQMTLPTM) traverse the membrane as a helical segment. Over 306-319 (PRPVCKVLAAVLHY) the chain is Extracellular. Cys-310 and Cys-400 are joined by a disulfide. The helical transmembrane segment at 320-340 (ALLSSLTWMAIEGFNLYLFLG) threads the bilayer. The Cytoplasmic segment spans residues 341–351 (RVYNAYIRRYL). The helical transmembrane segment at 352–372 (LKLCMLGWGFPALLVLLLLMI) threads the bilayer. Residues 373–413 (KSSVYGPCVTSLSKSQENGTGFQNVSMCWIRSPMVHSILVM) lie on the Extracellular side of the membrane. Residues Asn-390 and Asn-396 are each glycosylated (N-linked (GlcNAc...) asparagine). Residues 414 to 434 (GYGGFTSLFNLVVLAWALWIL) traverse the membrane as a helical segment. Over 435 to 453 (CRLRAREKALSPWAYRDTA) the chain is Cytoplasmic. A helical transmembrane segment spans residues 454–476 (MVLGLTVLLGTTWTLAFFSFGVF). At 477-480 (LLPQ) the chain is on the extracellular side. The chain crosses the membrane as a helical span at residues 481–500 (LFLFTIFNSLYGFFLFLWFC). Residues 501–524 (SQKRYSDAEAKAEMEAVSSSQMTH) lie on the Cytoplasmic side of the membrane.

Belongs to the G-protein coupled receptor 2 family. Adhesion G-protein coupled receptor (ADGR) subfamily. In terms of assembly, heterodimer of 2 chains generated by proteolytic processing; the large extracellular N-terminal fragment and the membrane-bound C-terminal fragment predominantly remain associated and non-covalently linked. In terms of processing, autoproteolytically processed at the GPS region of the GAIN-B domain; this cleavage modulates receptor activity. As to expression, expressed at least in kidney, heart, brain and spleen. Isoform 1 is predominant in spleen. In the kidney, both isoform 1 and isoform 2 are expressed at similar levels. In terms of tissue distribution, isoform 2 is the major form in heart and brain. In the kidney, both isoform 1 and isoform 2 are expressed at similar levels.

It localises to the cell membrane. Its activity is regulated as follows. Forms a heterodimer of 2 chains generated by proteolytic processing that remain associated through non-covalent interactions mediated by the GAIN-B domain. In the inactivated receptor, the Stachel sequence (also named stalk) is embedded in the GAIN-B domain, where it adopts a beta-strand conformation. On activation, the Stachel moves into the 7 transmembrane region and adopts a twisted hook-shaped configuration that forms contacts within the receptor, leading to coupling of a G-alpha protein, which activates signaling. The cleaved GAIN-B and N-terminal domains can then dissociate from the rest of the receptor. Orphan adhesion G-protein coupled receptor (aGPCR). Ligand binding causes a conformation change that triggers signaling via guanine nucleotide-binding proteins (G proteins) and modulates the activity of downstream effectors, such as adenylate cyclase. ADGRG5 is specifically coupled to G(s) G proteins and mediates activation of adenylate cyclase activity. Its function is as follows. Isoform 1, but not isoform 2, is constitutively active, as evidenced by elevated basal cAMP levels, and responds to mechanical activation (shaking). In Mus musculus (Mouse), this protein is Adhesion G-protein coupled receptor G5.